Consider the following 222-residue polypeptide: Charged multivesicular body protein 4b (222 aa).

Disordered stretches follow at residues 1 to 21 (MSLI…PSPQ) and 177 to 222 (NLLE…WATA). Residues 21–182 (QEAIQKLRDT…ELDKNLLEVQ (162 aa)) are a coiled coil.

The protein belongs to the SNF7 family. In terms of assembly, probable core component of the endosomal sorting required for transport complex III (ESCRT-III). ESCRT-III components are thought to multimerize to form a flat lattice on the perimeter membrane of the endosome.

It localises to the cytoplasm. Its subcellular location is the cytosol. The protein localises to the late endosome membrane. The protein resides in the midbody. Probable core component of the endosomal sorting required for transport complex III (ESCRT-III) which is involved in multivesicular bodies (MVBs) formation and sorting of endosomal cargo proteins into MVBs. MVBs contain intraluminal vesicles (ILVs) that are generated by invagination and scission from the limiting membrane of the endosome and mostly are delivered to lysosomes enabling degradation of membrane proteins, such as stimulated growth factor receptors, lysosomal enzymes and lipids. This Xenopus laevis (African clawed frog) protein is Charged multivesicular body protein 4b (chmp4b).